The sequence spans 794 residues: EVI5-like protein (794 aa).

Residues 1-30 are compositionally biased toward polar residues; sequence MASPTLSPDSSSQEALSAPTCSPTSDSENL. Disordered regions lie at residues 1–36 and 49–75; these read MASP…DELE and EADS…SSSA. The span at 55–75 shows a compositional bias: low complexity; that stretch reads MRSMNGSRRNSGSSLVSSSSA. Residues 115-300 enclose the Rab-GAP TBC domain; sequence GIPHHFRAIV…RVFDIFMYEG (186 aa). 2 coiled-coil regions span residues 358–449 and 569–709; these read KKMK…QQEN and EAQA…LKGP. A Phosphoserine modification is found at Ser685. Residues 766–794 are disordered; it reads LERPAKDSEGSSDSDADELAAPYSQGLDN.

In terms of assembly, may interact with RAB10.

Its function is as follows. Functions as a GTPase-activating protein (GAP) with a broad specificity. The polypeptide is EVI5-like protein (EVI5L) (Homo sapiens (Human)).